Reading from the N-terminus, the 446-residue chain is MSTILQNVPAGQKVGIAFSGGLDTSAALHWMKLKGAIPYAYTANLGQPDEPDYDEIPRKAMLYGAENARLIDCRAQLANEGIAALQAGAFHVTTAGVTYFNTTPLGRAVTGTMLVSAMKEDDVHIWGDGSTYKGNDIERFYRYGLLTNPNLKIYKPWLDQLFIDELGGRAEMSAFMTKAGFGYKMSAEKAYSTDSNMLGATHEAKDLENLDSGMQIVQPIMGVAFWKDEVEVKRETVSVRFEEGRPVALNGVEHANLVELILEANRIGGRHGLGMSDQIENRIIEAKSRGIYEAPGLALLFIAYERLVTGIHNEDTIEQYRDHGRKLGRLLYQGRWFDPQAIMLRETAQRWVARAVTGEVTIELRRGNDYSILNTVSPNLTYKPERLSMEKVAGAFTPLDRIGQLTMRNLDIVDTREKLAIYTRTGLLSPGQGTAVPRLSNDDETK.

Residues 17-25 (AFSGGLDTS) and A43 each bind ATP. Y99 contributes to the L-citrulline binding site. The ATP site is built by G129 and T131. L-aspartate contacts are provided by T131, N135, and D136. L-citrulline is bound at residue N135. D136 serves as a coordination point for ATP. 2 residues coordinate L-citrulline: R139 and S192. Position 194 (D194) interacts with ATP. L-citrulline-binding residues include T201, E203, and E280.

Belongs to the argininosuccinate synthase family. Type 2 subfamily. In terms of assembly, homotetramer.

It is found in the cytoplasm. The enzyme catalyses L-citrulline + L-aspartate + ATP = 2-(N(omega)-L-arginino)succinate + AMP + diphosphate + H(+). It functions in the pathway amino-acid biosynthesis; L-arginine biosynthesis; L-arginine from L-ornithine and carbamoyl phosphate: step 2/3. The chain is Argininosuccinate synthase from Variovorax paradoxus (strain S110).